A 417-amino-acid polypeptide reads, in one-letter code: NADH-quinone oxidoreductase subunit D (417 aa).

The protein belongs to the complex I 49 kDa subunit family. As to quaternary structure, NDH-1 is composed of 14 different subunits. Subunits NuoB, C, D, E, F, and G constitute the peripheral sector of the complex.

The protein resides in the cell inner membrane. It catalyses the reaction a quinone + NADH + 5 H(+)(in) = a quinol + NAD(+) + 4 H(+)(out). NDH-1 shuttles electrons from NADH, via FMN and iron-sulfur (Fe-S) centers, to quinones in the respiratory chain. The immediate electron acceptor for the enzyme in this species is believed to be ubiquinone. Couples the redox reaction to proton translocation (for every two electrons transferred, four hydrogen ions are translocated across the cytoplasmic membrane), and thus conserves the redox energy in a proton gradient. The chain is NADH-quinone oxidoreductase subunit D from Burkholderia ambifaria (strain MC40-6).